The primary structure comprises 484 residues: Ornithine decarboxylase (484 aa).

Lys114 bears the N6-(pyridoxal phosphate)lysine mark. Pyridoxal 5'-phosphate contacts are provided by residues Ser245, Gly282, and Glu315–Arg318. Phe381–Asp382 provides a ligand contact to substrate. Cys422 functions as the Proton donor; shared with dimeric partner in the catalytic mechanism. Asp423 provides a ligand contact to substrate. Tyr452 is a binding site for pyridoxal 5'-phosphate.

It belongs to the Orn/Lys/Arg decarboxylase class-II family. As to quaternary structure, homodimer. Only the dimer is catalytically active, as the active sites are constructed of residues from both monomers. It depends on pyridoxal 5'-phosphate as a cofactor.

The protein resides in the cytoplasm. It catalyses the reaction L-ornithine + H(+) = putrescine + CO2. Its pathway is amine and polyamine biosynthesis; putrescine biosynthesis via L-ornithine pathway; putrescine from L-ornithine: step 1/1. Its activity is regulated as follows. Inhibited by antizyme (AZ) OAZ1 in response to polyamine levels. AZ inhibits the assembly of the functional homodimer by binding to ODC monomers and targeting them for ubiquitin-independent proteolytic destruction by the 26S proteasome. Functionally, catalyzes the first and rate-limiting step of polyamine biosynthesis that converts ornithine into putrescine, which is the precursor for the polyamines, spermidine and spermine. Polyamines are essential for cell proliferation and are implicated in cellular processes, ranging from DNA replication to apoptosis. The polypeptide is Ornithine decarboxylase (spe-1) (Neurospora crassa (strain ATCC 24698 / 74-OR23-1A / CBS 708.71 / DSM 1257 / FGSC 987)).